The primary structure comprises 91 residues: uncharacterized protein (91 aa).

It is found in the plastid. The protein resides in the chloroplast. This is an uncharacterized protein from Phalaenopsis aphrodite subsp. formosana (Moth orchid).